The sequence spans 1042 residues: Ubiquitin carboxyl-terminal hydrolase 38 (1042 aa).

Residues 445–949 (TGLINLGNTC…TAYVLLYKKQ (505 aa)) enclose the USP domain. Cys454 functions as the Nucleophile in the catalytic mechanism. His857 (proton acceptor) is an active-site residue.

Belongs to the peptidase C19 family. Interacts with isoform 1 of FBXW7; this interaction prevents FBXW7-mediated degradation of MYC.

The protein resides in the cytoplasm. The protein localises to the nucleus. It catalyses the reaction Thiol-dependent hydrolysis of ester, thioester, amide, peptide and isopeptide bonds formed by the C-terminal Gly of ubiquitin (a 76-residue protein attached to proteins as an intracellular targeting signal).. In terms of biological role, deubiquitinating enzyme that plays a role in various cellular processes, including DNA repair, cell cycle regulation, and immune response. Plays a role in the inhibition of type I interferon signaling by mediating the 'Lys-33' to 'Lys-48' ubiquitination transition of TBK1 leading to its degradation. Cleaves the ubiquitin chain from the histone demethylase LSD1/KDM1A and prevents it from degradation by the 26S proteasome, thus maintaining LSD1 protein level in cells. Plays a role in the DNA damage response by regulating the deacetylase activity of HDAC1. Mechanistically, removes the 'Lys-63'-linked ubiquitin chain promoting the deacetylase activity of HDAC1 in response to DNA damage. Also acts as a specific deubiquitinase of histone deacetylase 3/HDAC3 and cleaves its 'Lys-63'-linked ubiquitin chains to lower its histone deacetylase activity. Regulates MYC levels and cell proliferation via antagonizing ubiquitin E3 ligase FBXW7 thereby preventing MYC 'Lys-48'-linked ubiquitination and degradation. Participates in antiviral response by removing both 'Lys-48'-linked and 'Lys-63'-linked polyubiquitination of Zika virus envelope protein E. Constitutively associated with IL-33R/IL1RL1, deconjugates its 'Lys-27'-linked polyubiquitination resulting in its autophagic degradation. The sequence is that of Ubiquitin carboxyl-terminal hydrolase 38 (Usp38) from Mus musculus (Mouse).